Consider the following 118-residue polypeptide: Putative cytochrome P450 family member 4F30 (118 aa).

The tract at residues 1 to 64 is disordered; the sequence is MVTPAGCLGG…GPLHILGTDG (64 aa). Positions 28–43 are enriched in polar residues; sequence RAGQTGQAVSGAQVSS.

The chain is Putative cytochrome P450 family member 4F30 (CYP4F30P) from Homo sapiens (Human).